The primary structure comprises 488 residues: Ribulose bisphosphate carboxylase large chain (488 aa).

Substrate-binding residues include asparagine 127 and threonine 177. The active-site Proton acceptor is the lysine 179. Lysine 181 is a binding site for substrate. Mg(2+) contacts are provided by lysine 205, aspartate 207, and glutamate 208. N6-carboxylysine is present on lysine 205. Histidine 297 acts as the Proton acceptor in catalysis. Residues arginine 298, histidine 330, and serine 382 each coordinate substrate.

Belongs to the RuBisCO large chain family. Type I subfamily. Heterohexadecamer of 8 large chains and 8 small chains. The cofactor is Mg(2+).

Its subcellular location is the plastid. It is found in the chloroplast. It carries out the reaction 2 (2R)-3-phosphoglycerate + 2 H(+) = D-ribulose 1,5-bisphosphate + CO2 + H2O. It catalyses the reaction D-ribulose 1,5-bisphosphate + O2 = 2-phosphoglycolate + (2R)-3-phosphoglycerate + 2 H(+). Functionally, ruBisCO catalyzes two reactions: the carboxylation of D-ribulose 1,5-bisphosphate, the primary event in carbon dioxide fixation, as well as the oxidative fragmentation of the pentose substrate in the photorespiration process. Both reactions occur simultaneously and in competition at the same active site. The protein is Ribulose bisphosphate carboxylase large chain of Pylaiella littoralis (Seaweed).